We begin with the raw amino-acid sequence, 380 residues long: MRIVADENIPLLDAFFAHFGEIHRLPGRAIDRAAVANADILLVRSVTPVTRELLEGSPVRFVGTCTIGTDHLDLDGFQQAGIQWASAPGCNARGVVDYVLGSLLTLAEIEGVDLAQRTYGVVGAGQVGGRLVDVLKALGWNVLVCDPPRKSAEGGDFVSLDEILQRCDVISLHTPLSKAGASATWHLLDETRLRQLRQGAWLINASRGAVVDNTALHDVLHEREDLQAVLDVWEGEPQVNVALADLCVLGTPHIAGYSLDGRQRGTAQIYQALCAFLGQPAVIKLDDLLPKPWLAQVSLDASSDPVWALNMLCRGVYDPRRDDADFRRSLTGDTASQRLAFDALRKHYPPRREIEGLKVRLEGESGGLAQLVRALGAVLV.

The substrate site is built by Ser45 and Thr66. NAD(+)-binding positions include 126–127 (QV), Asp146, Thr174, 205–207 (ASR), and Asp231. The active site involves Arg207. The active site involves Glu236. His253 serves as the catalytic Proton donor. Residue Gly256 coordinates NAD(+). Residue Tyr257 coordinates substrate.

This sequence belongs to the D-isomer specific 2-hydroxyacid dehydrogenase family. PdxB subfamily. Homodimer.

The protein resides in the cytoplasm. The catalysed reaction is 4-phospho-D-erythronate + NAD(+) = (R)-3-hydroxy-2-oxo-4-phosphooxybutanoate + NADH + H(+). The protein operates within cofactor biosynthesis; pyridoxine 5'-phosphate biosynthesis; pyridoxine 5'-phosphate from D-erythrose 4-phosphate: step 2/5. Catalyzes the oxidation of erythronate-4-phosphate to 3-hydroxy-2-oxo-4-phosphonooxybutanoate. This is Erythronate-4-phosphate dehydrogenase from Pseudomonas savastanoi pv. phaseolicola (strain 1448A / Race 6) (Pseudomonas syringae pv. phaseolicola (strain 1448A / Race 6)).